The chain runs to 310 residues: 4-diphosphocytidyl-2-C-methyl-D-erythritol kinase (310 aa).

The active site involves lysine 20. 106-116 (PMGGGLGGGSS) lines the ATP pocket. Aspartate 148 is an active-site residue.

This sequence belongs to the GHMP kinase family. IspE subfamily. In terms of assembly, homodimer.

It catalyses the reaction 4-CDP-2-C-methyl-D-erythritol + ATP = 4-CDP-2-C-methyl-D-erythritol 2-phosphate + ADP + H(+). It functions in the pathway isoprenoid biosynthesis; isopentenyl diphosphate biosynthesis via DXP pathway; isopentenyl diphosphate from 1-deoxy-D-xylulose 5-phosphate: step 3/6. Catalyzes the phosphorylation of the position 2 hydroxy group of 4-diphosphocytidyl-2C-methyl-D-erythritol. The protein is 4-diphosphocytidyl-2-C-methyl-D-erythritol kinase of Yersinia pseudotuberculosis serotype O:3 (strain YPIII).